Reading from the N-terminus, the 423-residue chain is MATAMAEDTSFEGDQLASMTTDDIGRASRLLANEIRILKEESQRTNLDLESVKEKIKENQEKIKLNKQLPYLVGNIVEILEMSPEDDAEEDGANIDLDSQRKGKCVVLKTSTRQTIFLPVVGLVDPDTLKPGDLVGVNKDSYLILDTLPSEYDSRVKAMEVDEKPTEDYNDIGGLEKQIQELVEAIVLPMTHKEQFEKLGIRPPKGVLLYGPPGTGKTLMARACAAQTNATFLKLAGPQLVQMFIGDGAKLVRDAFLLAKEKSPCIIFIDEIDAIGTKRFDSEVSGDREVQRTMLELLNQLDGFSSDDRIKVIAATNRADILDPALMRSGRLDRKIEFPHPTEEARGRILQIHSRKMNVNADVNFEELARSTDDFNGAQLKAVCVEAGMLALRRDATEVNHEDFNEGIIQVQAKKKASLNYYA.

At Ser18 the chain carries Phosphoserine. ATP is bound at residue 211–218; sequence GPPGTGKT. Glycyl lysine isopeptide (Lys-Gly) (interchain with G-Cter in ubiquitin) cross-links involve residues Lys234, Lys278, and Lys415.

Belongs to the AAA ATPase family. In terms of assembly, component of the 19S regulatory particle (RP/PA700) base subcomplex of the 26S proteasome. The 26S proteasome is composed of a core protease (CP), known as the 20S proteasome, capped at one or both ends by the 19S regulatory particle (RP/PA700). The RP/PA700 complex is composed of at least 17 different subunits in two subcomplexes, the base and the lid, which form the portions proximal and distal to the 20S proteolytic core, respectively.

Its subcellular location is the cytoplasm. It localises to the nucleus. Its function is as follows. The 26S proteasome is involved in the ATP-dependent degradation of ubiquitinated proteins. The regulatory (or ATPase) complex confers ATP dependency and substrate specificity to the 26S complex. This chain is 26S proteasome regulatory subunit 6A homolog B (RPT5B), found in Arabidopsis thaliana (Mouse-ear cress).